A 292-amino-acid chain; its full sequence is tRNA (guanine-N(7)-)-methyltransferase (292 aa).

Residues 1–54 (MLKRDQSEMDIEAETANMGKEEKESFVHKRQKYRQEQEEKRLAAKKGVSFEQPE) form a disordered region. Over residues 19-42 (GKEEKESFVHKRQKYRQEQEEKRL) the composition is skewed to basic and acidic residues. Residues glycine 110, 133–134 (EI), 168–169 (NA), and cysteine 188 each bind S-adenosyl-L-methionine. The active site involves aspartate 191. An S-adenosyl-L-methionine-binding site is contributed by 266–268 (TEE).

This sequence belongs to the class I-like SAM-binding methyltransferase superfamily. TrmB family. Forms a complex with TRM82.

It localises to the nucleus. The catalysed reaction is guanosine(46) in tRNA + S-adenosyl-L-methionine = N(7)-methylguanosine(46) in tRNA + S-adenosyl-L-homocysteine. It participates in tRNA modification; N(7)-methylguanine-tRNA biosynthesis. Functionally, catalyzes the formation of N(7)-methylguanine at position 46 (m7G46) in tRNA. The polypeptide is tRNA (guanine-N(7)-)-methyltransferase (Yarrowia lipolytica (strain CLIB 122 / E 150) (Yeast)).